The chain runs to 129 residues: UPF0325 protein ECA1027 (129 aa).

The protein belongs to the UPF0325 family.

The sequence is that of UPF0325 protein ECA1027 from Pectobacterium atrosepticum (strain SCRI 1043 / ATCC BAA-672) (Erwinia carotovora subsp. atroseptica).